Reading from the N-terminus, the 452-residue chain is tRNA modification GTPase MnmE (452 aa).

(6S)-5-formyl-5,6,7,8-tetrahydrofolate contacts are provided by Arg21, Glu78, and Lys118. The TrmE-type G domain occupies 214–375; sequence GMKVVIAGRP…LRDHLKQAMG (162 aa). Position 224 (Asn224) interacts with K(+). GTP contacts are provided by residues 224–229, 243–249, and 268–271; these read NAGKSS, TDIAGTT, and DTAG. Residue Ser228 coordinates Mg(2+). Residues Thr243, Ile245, and Thr248 each coordinate K(+). Thr249 contributes to the Mg(2+) binding site. Lys452 provides a ligand contact to (6S)-5-formyl-5,6,7,8-tetrahydrofolate.

It belongs to the TRAFAC class TrmE-Era-EngA-EngB-Septin-like GTPase superfamily. TrmE GTPase family. As to quaternary structure, homodimer. Heterotetramer of two MnmE and two MnmG subunits. The cofactor is K(+).

It is found in the cytoplasm. Its function is as follows. Exhibits a very high intrinsic GTPase hydrolysis rate. Involved in the addition of a carboxymethylaminomethyl (cmnm) group at the wobble position (U34) of certain tRNAs, forming tRNA-cmnm(5)s(2)U34. This Haemophilus influenzae (strain 86-028NP) protein is tRNA modification GTPase MnmE.